A 364-amino-acid polypeptide reads, in one-letter code: Aminomethyltransferase (364 aa).

It belongs to the GcvT family. As to quaternary structure, the glycine cleavage system is composed of four proteins: P, T, L and H.

The catalysed reaction is N(6)-[(R)-S(8)-aminomethyldihydrolipoyl]-L-lysyl-[protein] + (6S)-5,6,7,8-tetrahydrofolate = N(6)-[(R)-dihydrolipoyl]-L-lysyl-[protein] + (6R)-5,10-methylene-5,6,7,8-tetrahydrofolate + NH4(+). Its function is as follows. The glycine cleavage system catalyzes the degradation of glycine. The sequence is that of Aminomethyltransferase from Shigella flexneri serotype 5b (strain 8401).